Consider the following 474-residue polypeptide: UDP-glycosyltransferase 71E1 (474 aa).

Residues Ser-275, 341–342 (WA), 359–367 (HCGWNSTLE), and 381–384 (YAEQ) each bind UDP-alpha-D-glucose.

It belongs to the UDP-glycosyltransferase family.

Functionally, may glycosylate diterpenes or flavonols in leaves. The polypeptide is UDP-glycosyltransferase 71E1 (Stevia rebaudiana (Stevia)).